A 226-amino-acid polypeptide reads, in one-letter code: PKHD-type hydroxylase Daci_1172 (226 aa).

Positions 78 to 178 (KVLPPRFNRY…RYASFFWTHS (101 aa)) constitute a Fe2OG dioxygenase domain. H96, D98, and H159 together coordinate Fe cation. A 2-oxoglutarate-binding site is contributed by R169.

Fe(2+) is required as a cofactor. L-ascorbate serves as cofactor.

The protein is PKHD-type hydroxylase Daci_1172 of Delftia acidovorans (strain DSM 14801 / SPH-1).